The chain runs to 396 residues: MKAVKSERERGSRRRHRDGDVVLPAGVVVKQERLSPEVAPPAHRRPDHSGGSPSPPTSEPARSGHRGNRARGVSRSPPKKKNKASGRRSKSPRSKRNRSPHHSTVKVKQEREDHPRRGREDRQHREPSEQEHRRARNSDRDRHRGHSHQRRTSNERPGSGQGQGRDRDTQNLQAQEEEREFYNARRREHRQRNDVGGGGSESQELVPRPGGNNKEKEVPAKEKPSFELSGALLEDTNTFRGVVIKYSEPPEARIPKKRWRLYPFKNDEVLPVMYIHRQSAYLLGRHRRIADIPIDHPSCSKQHAVFQYRLVEYTRADGTVGRRVKPYIIDLGSGNGTFLNNKRIEPQRYYELKEKDVLKFGFSSREYVLLHESSDTSEIDRKDDEDEEEEEEVSDS.

Residues methionine 1–arginine 10 are compositionally biased toward basic and acidic residues. A disordered region spans residues methionine 1 to glutamate 227. Lysine 30 participates in a covalent cross-link: Glycyl lysine isopeptide (Lys-Gly) (interchain with G-Cter in SUMO); alternate. Residue lysine 30 forms a Glycyl lysine isopeptide (Lys-Gly) (interchain with G-Cter in SUMO1); alternate linkage. A Glycyl lysine isopeptide (Lys-Gly) (interchain with G-Cter in SUMO2); alternate cross-link involves residue lysine 30. A phosphoserine mark is found at serine 35, serine 49, serine 52, and serine 54. Threonine 57 carries the post-translational modification Phosphothreonine. Residues serine 58 and serine 99 each carry the phosphoserine modification. Residues proline 77–valine 105 show a composition bias toward basic residues. Positions valine 107 to arginine 142 are enriched in basic and acidic residues. Residue lysine 108 forms a Glycyl lysine isopeptide (Lys-Gly) (interchain with G-Cter in SUMO2) linkage. Position 153 is a phosphoserine (serine 153). A coiled-coil region spans residues arginine 165–glycine 196. Serine 202 is modified (phosphoserine). A compositionally biased stretch (basic and acidic residues) spans asparagine 213–serine 225. Lysine 223 is covalently cross-linked (Glycyl lysine isopeptide (Lys-Gly) (interchain with G-Cter in SUMO2)). The FHA domain occupies tyrosine 281 to isoleucine 344. The segment covering serine 373–lysine 382 has biased composition (basic and acidic residues). The interval serine 373–serine 396 is disordered. The segment covering aspartate 383–serine 396 has biased composition (acidic residues). At serine 394 the chain carries Phosphoserine.

In terms of assembly, component of activated spliceosome complexes. Component of the minor spliceosome, which splices U12-type introns. Binds SMAD4 and CREBBP/EP300. Binds the SMAD1/OAZ1/PSMB4 complex. Interacts with DROSHA and SMARCA4. Component of the SNARP complex which consists at least of SNIP1, SNW1, THRAP3, BCLAF1 and PNN. Post-translationally, degraded by the proteasome upon binding to the SMAD1/OAZ1/PSMB4 complex. As to expression, ubiquitous, with highest expression in heart and skeletal muscle.

The protein localises to the nucleus. Functionally, required for pre-mRNA splicing as component of the spliceosome. As a component of the minor spliceosome, involved in the splicing of U12-type introns in pre-mRNAs. Down-regulates NF-kappa-B signaling by competing with RELA for CREBBP/EP300 binding. Involved in the microRNA (miRNA) biogenesis. May be involved in cyclin-D1/CCND1 mRNA stability through the SNARP complex which associates with both the 3'end of the CCND1 gene and its mRNA. The sequence is that of Smad nuclear-interacting protein 1 (SNIP1) from Homo sapiens (Human).